A 597-amino-acid polypeptide reads, in one-letter code: NADH-quinone oxidoreductase subunit C/D (597 aa).

An NADH dehydrogenase I subunit C region spans residues 1 to 187 (MIDENKKKNT…ESFFLDEQKE (187 aa)). The interval 211–597 (DFMFLNLGPN…IDFVMSDVDR (387 aa)) is NADH dehydrogenase I subunit D.

It in the N-terminal section; belongs to the complex I 30 kDa subunit family. This sequence in the C-terminal section; belongs to the complex I 49 kDa subunit family. NDH-1 is composed of 13 different subunits. Subunits NuoB, CD, E, F, and G constitute the peripheral sector of the complex.

The protein resides in the cell inner membrane. It catalyses the reaction a quinone + NADH + 5 H(+)(in) = a quinol + NAD(+) + 4 H(+)(out). In terms of biological role, NDH-1 shuttles electrons from NADH, via FMN and iron-sulfur (Fe-S) centers, to quinones in the respiratory chain. The immediate electron acceptor for the enzyme in this species is believed to be ubiquinone. Couples the redox reaction to proton translocation (for every two electrons transferred, four hydrogen ions are translocated across the cytoplasmic membrane), and thus conserves the redox energy in a proton gradient. The polypeptide is NADH-quinone oxidoreductase subunit C/D (Buchnera aphidicola subsp. Schizaphis graminum (strain Sg)).